The following is a 173-amino-acid chain: NADH-ubiquinone oxidoreductase chain 6 (173 aa).

5 consecutive transmembrane segments (helical) span residues 1–21, 27–47, 48–68, 87–107, and 139–159; these read MTYFMLFLGLCFVLGGLAVAS, YGVVGLVLASVVGCGWLLSLG, VSFVSLVLFMVYLGGMLVVFV, VVGYGVSFIVVLAAGAVVGGL, and CGVGMFLVAGWGLLLTLFVVL.

The protein belongs to the complex I subunit 6 family.

It localises to the mitochondrion membrane. The catalysed reaction is a ubiquinone + NADH + 5 H(+)(in) = a ubiquinol + NAD(+) + 4 H(+)(out). Its function is as follows. Core subunit of the mitochondrial membrane respiratory chain NADH dehydrogenase (Complex I) that is believed to belong to the minimal assembly required for catalysis. Complex I functions in the transfer of electrons from NADH to the respiratory chain. The immediate electron acceptor for the enzyme is believed to be ubiquinone. In Synthliboramphus wumizusume (Japanese murrelet), this protein is NADH-ubiquinone oxidoreductase chain 6 (MT-ND6).